The following is a 445-amino-acid chain: Exodeoxyribonuclease 7 large subunit (445 aa).

It belongs to the XseA family. Heterooligomer composed of large and small subunits.

The protein localises to the cytoplasm. It carries out the reaction Exonucleolytic cleavage in either 5'- to 3'- or 3'- to 5'-direction to yield nucleoside 5'-phosphates.. Bidirectionally degrades single-stranded DNA into large acid-insoluble oligonucleotides, which are then degraded further into small acid-soluble oligonucleotides. The sequence is that of Exodeoxyribonuclease 7 large subunit from Xanthomonas oryzae pv. oryzae (strain KACC10331 / KXO85).